Here is a 119-residue protein sequence, read N- to C-terminus: Protein TusC (119 aa).

It belongs to the DsrF/TusC family. In terms of assembly, heterohexamer, formed by a dimer of trimers. The hexameric TusBCD complex contains 2 copies each of TusB, TusC and TusD. The TusBCD complex interacts with TusE.

The protein localises to the cytoplasm. Its function is as follows. Part of a sulfur-relay system required for 2-thiolation of 5-methylaminomethyl-2-thiouridine (mnm(5)s(2)U) at tRNA wobble positions. The protein is Protein TusC of Pectobacterium atrosepticum (strain SCRI 1043 / ATCC BAA-672) (Erwinia carotovora subsp. atroseptica).